A 130-amino-acid polypeptide reads, in one-letter code: Sulfurtransferase TusD (130 aa).

Catalysis depends on Cys78, which acts as the Cysteine persulfide intermediate.

This sequence belongs to the DsrE/TusD family. As to quaternary structure, heterohexamer, formed by a dimer of trimers. The hexameric TusBCD complex contains 2 copies each of TusB, TusC and TusD. The TusBCD complex interacts with TusE.

The protein localises to the cytoplasm. Part of a sulfur-relay system required for 2-thiolation of 5-methylaminomethyl-2-thiouridine (mnm(5)s(2)U) at tRNA wobble positions. Accepts sulfur from TusA and transfers it in turn to TusE. The sequence is that of Sulfurtransferase TusD from Buchnera aphidicola subsp. Baizongia pistaciae (strain Bp).